The sequence spans 469 residues: Ribosomal protein uS12 methylthiotransferase RimO (469 aa).

The region spanning 3-119 (TRVYMHTLGC…VARIVSDAQA (117 aa)) is the MTTase N-terminal domain. Cys12, Cys48, Cys82, Cys154, Cys158, and Cys161 together coordinate [4Fe-4S] cluster. In terms of domain architecture, Radical SAM core spans 140-370 (SLPSHTAYLK…MAVQQAISRA (231 aa)). In terms of domain architecture, TRAM spans 373 to 441 (QAMIGRRVEV…EYDLVGRVVA (69 aa)). Residues 444 to 469 (PSRAARPLPAAPRAAPARKGGLNVLR) form a disordered region. Residues 447–461 (AARPLPAAPRAAPAR) show a composition bias toward low complexity.

The protein belongs to the methylthiotransferase family. RimO subfamily. Requires [4Fe-4S] cluster as cofactor.

The protein resides in the cytoplasm. The enzyme catalyses L-aspartate(89)-[ribosomal protein uS12]-hydrogen + (sulfur carrier)-SH + AH2 + 2 S-adenosyl-L-methionine = 3-methylsulfanyl-L-aspartate(89)-[ribosomal protein uS12]-hydrogen + (sulfur carrier)-H + 5'-deoxyadenosine + L-methionine + A + S-adenosyl-L-homocysteine + 2 H(+). Functionally, catalyzes the methylthiolation of an aspartic acid residue of ribosomal protein uS12. This is Ribosomal protein uS12 methylthiotransferase RimO from Anaeromyxobacter sp. (strain K).